The chain runs to 622 residues: 1-deoxy-D-xylulose-5-phosphate synthase (622 aa).

Thiamine diphosphate-binding positions include His74 and 115 to 117 (GHS). Asp146 contributes to the Mg(2+) binding site. Thiamine diphosphate is bound by residues 147 to 148 (GA), Asn175, Tyr286, and Glu366. Mg(2+) is bound at residue Asn175.

This sequence belongs to the transketolase family. DXPS subfamily. Homodimer. Requires Mg(2+) as cofactor. The cofactor is thiamine diphosphate.

The catalysed reaction is D-glyceraldehyde 3-phosphate + pyruvate + H(+) = 1-deoxy-D-xylulose 5-phosphate + CO2. Its pathway is metabolic intermediate biosynthesis; 1-deoxy-D-xylulose 5-phosphate biosynthesis; 1-deoxy-D-xylulose 5-phosphate from D-glyceraldehyde 3-phosphate and pyruvate: step 1/1. In terms of biological role, catalyzes the acyloin condensation reaction between C atoms 2 and 3 of pyruvate and glyceraldehyde 3-phosphate to yield 1-deoxy-D-xylulose-5-phosphate (DXP). The sequence is that of 1-deoxy-D-xylulose-5-phosphate synthase from Carboxydothermus hydrogenoformans (strain ATCC BAA-161 / DSM 6008 / Z-2901).